Reading from the N-terminus, the 509-residue chain is Cytochrome P450 monooxygenase alt3 (509 aa).

The helical transmembrane segment at 25 to 45 (IITGIIVLPVLYVLLKVIYNL) threads the bilayer. Heme is bound at residue C450.

Belongs to the cytochrome P450 family. Heme serves as cofactor.

The protein localises to the membrane. It functions in the pathway secondary metabolite biosynthesis. Cytochrome P450 monooxygenase; part of the gene cluster that mediates the biosynthesis of alternapyrone derivatives. Alternapyrone is a decaketide with octa-methylation from methionine on every C2 unit except the third unit. All the domains in the polyketide synthase alt5 are apparently involved in alternapyrone synthesis, that is, the 8 CMeT, 7 KR, 7 DH, and 4 ER reactions in the 9 KS-mediated condensation steps required for alternapyrone synthesis. the alternapyrone produced by alt5 might be intensively modified by cytochrome P450 monooxygenases alt1, alt2 and alt3 and FAD-dependent oxidoreductase alt4 present in the alt gene cluster. The protein is Cytochrome P450 monooxygenase alt3 of Alternaria solani.